Consider the following 112-residue polypeptide: T cell receptor alpha variable 17 (112 aa).

The signal sequence occupies residues Met1 to Ser21. In terms of domain architecture, Ig-like spans Gln22–Asp112. Residues Asn38 and Asn42 are each glycosylated (N-linked (GlcNAc...) asparagine). Cys43 and Cys109 form a disulfide bridge.

Alpha-beta TR is a heterodimer composed of an alpha and beta chain; disulfide-linked. The alpha-beta TR is associated with the transmembrane signaling CD3 coreceptor proteins to form the TR-CD3 (TcR or TCR). The assembly of alpha-beta TR heterodimers with CD3 occurs in the endoplasmic reticulum where a single alpha-beta TR heterodimer associates with one CD3D-CD3E heterodimer, one CD3G-CD3E heterodimer and one CD247 homodimer forming a stable octameric structure. CD3D-CD3E and CD3G-CD3E heterodimers preferentially associate with TR alpha and TR beta chains, respectively. The association of the CD247 homodimer is the last step of TcR assembly in the endoplasmic reticulum and is required for transport to the cell surface.

The protein localises to the cell membrane. V region of the variable domain of T cell receptor (TR) alpha chain that participates in the antigen recognition. Alpha-beta T cell receptors are antigen specific receptors which are essential to the immune response and are present on the cell surface of T lymphocytes. Recognize peptide-major histocompatibility (MH) (pMH) complexes that are displayed by antigen presenting cells (APC), a prerequisite for efficient T cell adaptive immunity against pathogens. Binding of alpha-beta TR to pMH complex initiates TR-CD3 clustering on the cell surface and intracellular activation of LCK that phosphorylates the ITAM motifs of CD3G, CD3D, CD3E and CD247 enabling the recruitment of ZAP70. In turn ZAP70 phosphorylates LAT, which recruits numerous signaling molecules to form the LAT signalosome. The LAT signalosome propagates signal branching to three major signaling pathways, the calcium, the mitogen-activated protein kinase (MAPK) kinase and the nuclear factor NF-kappa-B (NF-kB) pathways, leading to the mobilization of transcription factors that are critical for gene expression and essential for T cell growth and differentiation. The T cell repertoire is generated in the thymus, by V-(D)-J rearrangement. This repertoire is then shaped by intrathymic selection events to generate a peripheral T cell pool of self-MH restricted, non-autoaggressive T cells. Post-thymic interaction of alpha-beta TR with the pMH complexes shapes TR structural and functional avidity. This is T cell receptor alpha variable 17 from Homo sapiens (Human).